We begin with the raw amino-acid sequence, 303 residues long: Small ribosomal subunit protein uS2 (303 aa).

Residues 267–303 are disordered; it reads AESLSMAEEPAPPSQRKGPASETAEPVAEPAVTESGS.

It belongs to the universal ribosomal protein uS2 family.

This chain is Small ribosomal subunit protein uS2, found in Solibacter usitatus (strain Ellin6076).